An 834-amino-acid chain; its full sequence is Protein EFR3 homolog cmp44E (834 aa).

The stretch at 120 to 156 (NLFVESFLRMVQKLLEDSNPNLKIMATNSFVKFANIN) is one HEAT repeat. Residues 595–612 (LHAISIGLLVLISRVSGI) form a helical membrane-spanning segment.

The protein belongs to the EFR3 family. As to expression, expression during embryogenesis is ubiquitous with notably higher levels in the CNS and brain.

It is found in the membrane. An essential gene required for embryogenesis; required for cell viability. The chain is Protein EFR3 homolog cmp44E (stmA) from Drosophila melanogaster (Fruit fly).